The chain runs to 661 residues: Probable potassium transport system protein Kup 1 (661 aa).

A compositionally biased stretch (gly residues) spans 1–11 (MKGLFPAGGGN). Positions 1 to 38 (MKGLFPAGGGNPPSSYLSRFLPHRKERSPENVTSGRNG) are disordered. Transmembrane regions (helical) follow at residues 48–68 (LALGALGIVYGDIGTSPLYTI), 85–105 (IMGVLSLILWSLTMVVSIKYI), 139–159 (AVVVMAALTGAALLYGDGFIT), 177–197 (AAKNLIVPLACGILLGLFLVQ), 207–227 (IFGPVMLVWFATIATLGLLCI), 251–271 (VHGLVVLGSVVLSITGGEALY), 286–306 (WFAMVFPSLLLNYFGQGAALL), 324–344 (LLLPMVALATMASIIASQAMI), 384–404 (LMMVVCIGLVLVFRASSGLAG), 405–425 (AYGVAVTANMAITSVVYFFVA), 436–456 (TAPLVGLFLVFDITYFGSNLL), and 458–478 (FFDGGWFPLAVALVIVIVMAS).

The protein belongs to the HAK/KUP transporter (TC 2.A.72) family.

It is found in the cell inner membrane. It carries out the reaction K(+)(in) + H(+)(in) = K(+)(out) + H(+)(out). Transport of potassium into the cell. Likely operates as a K(+):H(+) symporter. The chain is Probable potassium transport system protein Kup 1 from Syntrophobacter fumaroxidans (strain DSM 10017 / MPOB).